Reading from the N-terminus, the 343-residue chain is N-acetyl-gamma-glutamyl-phosphate reductase (343 aa).

Cysteine 148 is a catalytic residue.

Belongs to the NAGSA dehydrogenase family. Type 1 subfamily.

It is found in the cytoplasm. The catalysed reaction is N-acetyl-L-glutamate 5-semialdehyde + phosphate + NADP(+) = N-acetyl-L-glutamyl 5-phosphate + NADPH + H(+). Its pathway is amino-acid biosynthesis; L-arginine biosynthesis; N(2)-acetyl-L-ornithine from L-glutamate: step 3/4. Catalyzes the NADPH-dependent reduction of N-acetyl-5-glutamyl phosphate to yield N-acetyl-L-glutamate 5-semialdehyde. The protein is N-acetyl-gamma-glutamyl-phosphate reductase of Caldicellulosiruptor saccharolyticus (strain ATCC 43494 / DSM 8903 / Tp8T 6331).